Here is a 349-residue protein sequence, read N- to C-terminus: Phenylalanine--tRNA ligase alpha subunit (349 aa).

Glutamate 258 contacts Mg(2+).

The protein belongs to the class-II aminoacyl-tRNA synthetase family. Phe-tRNA synthetase alpha subunit type 1 subfamily. In terms of assembly, tetramer of two alpha and two beta subunits. Mg(2+) is required as a cofactor.

It localises to the cytoplasm. The catalysed reaction is tRNA(Phe) + L-phenylalanine + ATP = L-phenylalanyl-tRNA(Phe) + AMP + diphosphate + H(+). This is Phenylalanine--tRNA ligase alpha subunit from Rickettsia conorii (strain ATCC VR-613 / Malish 7).